Here is a 127-residue protein sequence, read N- to C-terminus: NADPH-dependent 7-cyano-7-deazaguanine reductase (127 aa).

C40 functions as the Thioimide intermediate in the catalytic mechanism. The active-site Proton donor is the D47. Substrate is bound by residues 62–64 and 81–82; these read VEL and HE.

The protein belongs to the GTP cyclohydrolase I family. QueF type 1 subfamily.

The protein resides in the cytoplasm. The enzyme catalyses 7-aminomethyl-7-carbaguanine + 2 NADP(+) = 7-cyano-7-deazaguanine + 2 NADPH + 3 H(+). Its pathway is tRNA modification; tRNA-queuosine biosynthesis. Functionally, catalyzes the NADPH-dependent reduction of 7-cyano-7-deazaguanine (preQ0) to 7-aminomethyl-7-deazaguanine (preQ1). This is NADPH-dependent 7-cyano-7-deazaguanine reductase from Campylobacter lari (strain RM2100 / D67 / ATCC BAA-1060).